We begin with the raw amino-acid sequence, 202 residues long: uncharacterized protein (202 aa).

K136 is covalently cross-linked (Isoglutamyl lysine isopeptide (Lys-Gln) (interchain with Q-Cter in protein Pup)).

This is an uncharacterized protein from Mycobacterium tuberculosis (strain CDC 1551 / Oshkosh).